The sequence spans 359 residues: 3-dehydroquinate synthase (359 aa).

NAD(+) contacts are provided by residues 71 to 76, 105 to 109, 129 to 130, lysine 142, and lysine 151; these read DAEAAK, GAVTD, and TT. Zn(2+)-binding residues include glutamate 184, histidine 247, and histidine 263.

Belongs to the sugar phosphate cyclases superfamily. Dehydroquinate synthase family. NAD(+) is required as a cofactor. The cofactor is Co(2+). It depends on Zn(2+) as a cofactor.

The protein resides in the cytoplasm. It carries out the reaction 7-phospho-2-dehydro-3-deoxy-D-arabino-heptonate = 3-dehydroquinate + phosphate. Its pathway is metabolic intermediate biosynthesis; chorismate biosynthesis; chorismate from D-erythrose 4-phosphate and phosphoenolpyruvate: step 2/7. Catalyzes the conversion of 3-deoxy-D-arabino-heptulosonate 7-phosphate (DAHP) to dehydroquinate (DHQ). In Leifsonia xyli subsp. xyli (strain CTCB07), this protein is 3-dehydroquinate synthase.